Consider the following 332-residue polypeptide: Glycerol-3-phosphate dehydrogenase [NAD(P)+] (332 aa).

Trp-11, Arg-30, and Lys-108 together coordinate NADPH. Positions 108, 137, and 139 each coordinate sn-glycerol 3-phosphate. Ala-141 contacts NADPH. Positions 192, 245, 255, 256, and 257 each coordinate sn-glycerol 3-phosphate. Lys-192 serves as the catalytic Proton acceptor. Arg-256 is an NADPH binding site. The NADPH site is built by Val-280 and Glu-282.

Belongs to the NAD-dependent glycerol-3-phosphate dehydrogenase family.

It localises to the cytoplasm. It catalyses the reaction sn-glycerol 3-phosphate + NAD(+) = dihydroxyacetone phosphate + NADH + H(+). The catalysed reaction is sn-glycerol 3-phosphate + NADP(+) = dihydroxyacetone phosphate + NADPH + H(+). It functions in the pathway membrane lipid metabolism; glycerophospholipid metabolism. Catalyzes the reduction of the glycolytic intermediate dihydroxyacetone phosphate (DHAP) to sn-glycerol 3-phosphate (G3P), the key precursor for phospholipid synthesis. The sequence is that of Glycerol-3-phosphate dehydrogenase [NAD(P)+] from Burkholderia ambifaria (strain MC40-6).